Consider the following 110-residue polypeptide: Large ribosomal subunit protein uL24 (110 aa).

The protein belongs to the universal ribosomal protein uL24 family. In terms of assembly, part of the 50S ribosomal subunit.

Its function is as follows. One of two assembly initiator proteins, it binds directly to the 5'-end of the 23S rRNA, where it nucleates assembly of the 50S subunit. In terms of biological role, one of the proteins that surrounds the polypeptide exit tunnel on the outside of the subunit. The protein is Large ribosomal subunit protein uL24 of Roseiflexus sp. (strain RS-1).